Here is a 660-residue protein sequence, read N- to C-terminus: Bifunctional polymyxin resistance protein ArnA (660 aa).

Residues Met-1–Leu-304 form a formyltransferase ArnAFT region. His-86–Ile-88 is a (6R)-10-formyltetrahydrofolate binding site. His-104 acts as the Proton donor; for formyltransferase activity in catalysis. (6R)-10-formyltetrahydrofolate-binding positions include Arg-114 and Val-136–Asp-140. The segment at Arg-314–Ser-660 is dehydrogenase ArnADH. NAD(+) contacts are provided by residues Asp-347 and Asp-368–Ile-369. UDP-alpha-D-glucuronate is bound by residues Ala-393, Tyr-398, and Thr-432–Ser-433. The Proton acceptor; for decarboxylase activity role is filled by Glu-434. Residues Arg-460, Asn-492, Lys-526–Arg-535, and Tyr-613 each bind UDP-alpha-D-glucuronate. The Proton donor; for decarboxylase activity role is filled by Arg-619.

It in the N-terminal section; belongs to the Fmt family. UDP-L-Ara4N formyltransferase subfamily. The protein in the C-terminal section; belongs to the NAD(P)-dependent epimerase/dehydratase family. UDP-glucuronic acid decarboxylase subfamily. Homohexamer, formed by a dimer of trimers.

The catalysed reaction is UDP-alpha-D-glucuronate + NAD(+) = UDP-beta-L-threo-pentopyranos-4-ulose + CO2 + NADH. It catalyses the reaction UDP-4-amino-4-deoxy-beta-L-arabinose + (6R)-10-formyltetrahydrofolate = UDP-4-deoxy-4-formamido-beta-L-arabinose + (6S)-5,6,7,8-tetrahydrofolate + H(+). It participates in nucleotide-sugar biosynthesis; UDP-4-deoxy-4-formamido-beta-L-arabinose biosynthesis; UDP-4-deoxy-4-formamido-beta-L-arabinose from UDP-alpha-D-glucuronate: step 1/3. It functions in the pathway nucleotide-sugar biosynthesis; UDP-4-deoxy-4-formamido-beta-L-arabinose biosynthesis; UDP-4-deoxy-4-formamido-beta-L-arabinose from UDP-alpha-D-glucuronate: step 3/3. Its pathway is bacterial outer membrane biogenesis; lipopolysaccharide biosynthesis. Its function is as follows. Bifunctional enzyme that catalyzes the oxidative decarboxylation of UDP-glucuronic acid (UDP-GlcUA) to UDP-4-keto-arabinose (UDP-Ara4O) and the addition of a formyl group to UDP-4-amino-4-deoxy-L-arabinose (UDP-L-Ara4N) to form UDP-L-4-formamido-arabinose (UDP-L-Ara4FN). The modified arabinose is attached to lipid A and is required for resistance to polymyxin and cationic antimicrobial peptides. In Escherichia coli O17:K52:H18 (strain UMN026 / ExPEC), this protein is Bifunctional polymyxin resistance protein ArnA.